The sequence spans 153 residues: Myosin regulatory light chain LC-2, mantle muscle (153 aa).

Blocked amino end (Ala) is present on Ala-1. EF-hand domains follow at residues 13-48 and 82-117; these read RQMQ…LGRV and DPED…MGDN. Positions 26, 28, 30, and 37 each coordinate Ca(2+).

Functionally, in molluscan muscle, calcium regulation is associated with myosin rather than with actin. Muscle myosin contains two types of light chains: the catalytic light chain, essential for ATPase activity, and the regulatory light chain, a calcium-binding protein responsible for Ca(2+) dependent binding and Ca(2+) dependent Mg-ATPase activity. This chain is Myosin regulatory light chain LC-2, mantle muscle, found in Todarodes pacificus (Japanese flying squid).